A 210-amino-acid chain; its full sequence is Large ribosomal subunit protein bL17 (210 aa).

Residues 177–210 (TRSAQRPAFEQDAPESDSAPEAEAKTEEETASAN) form a disordered region.

Belongs to the bacterial ribosomal protein bL17 family. Part of the 50S ribosomal subunit. Contacts protein L32.

The polypeptide is Large ribosomal subunit protein bL17 (Rhodopirellula baltica (strain DSM 10527 / NCIMB 13988 / SH1)).